The chain runs to 93 residues: Putative regulatory protein Cthe_1316 (93 aa).

The disordered stretch occupies residues Arg-74–Glu-93. Acidic residues predominate over residues Glu-81–Glu-93.

This sequence belongs to the RemA family.

This chain is Putative regulatory protein Cthe_1316, found in Acetivibrio thermocellus (strain ATCC 27405 / DSM 1237 / JCM 9322 / NBRC 103400 / NCIMB 10682 / NRRL B-4536 / VPI 7372) (Clostridium thermocellum).